We begin with the raw amino-acid sequence, 564 residues long: Dihydroxy-acid dehydratase (564 aa).

Cysteine 55 contributes to the [2Fe-2S] cluster binding site. Residue aspartate 87 participates in Mg(2+) binding. Cysteine 128 lines the [2Fe-2S] cluster pocket. Residues aspartate 129 and lysine 130 each coordinate Mg(2+). The residue at position 130 (lysine 130) is an N6-carboxylysine. A [2Fe-2S] cluster-binding site is contributed by cysteine 200. Residue glutamate 452 participates in Mg(2+) binding. The active-site Proton acceptor is the serine 478.

This sequence belongs to the IlvD/Edd family. As to quaternary structure, homodimer. [2Fe-2S] cluster is required as a cofactor. The cofactor is Mg(2+).

It catalyses the reaction (2R)-2,3-dihydroxy-3-methylbutanoate = 3-methyl-2-oxobutanoate + H2O. It carries out the reaction (2R,3R)-2,3-dihydroxy-3-methylpentanoate = (S)-3-methyl-2-oxopentanoate + H2O. Its pathway is amino-acid biosynthesis; L-isoleucine biosynthesis; L-isoleucine from 2-oxobutanoate: step 3/4. It functions in the pathway amino-acid biosynthesis; L-valine biosynthesis; L-valine from pyruvate: step 3/4. In terms of biological role, functions in the biosynthesis of branched-chain amino acids. Catalyzes the dehydration of (2R,3R)-2,3-dihydroxy-3-methylpentanoate (2,3-dihydroxy-3-methylvalerate) into 2-oxo-3-methylpentanoate (2-oxo-3-methylvalerate) and of (2R)-2,3-dihydroxy-3-methylbutanoate (2,3-dihydroxyisovalerate) into 2-oxo-3-methylbutanoate (2-oxoisovalerate), the penultimate precursor to L-isoleucine and L-valine, respectively. The sequence is that of Dihydroxy-acid dehydratase from Polaromonas naphthalenivorans (strain CJ2).